A 473-amino-acid chain; its full sequence is Ribosomal RNA small subunit methyltransferase F (473 aa).

S-adenosyl-L-methionine-binding positions include 124 to 130, glutamate 148, aspartate 175, and aspartate 193; that span reads ASAPGSK. Cysteine 246 (nucleophile) is an active-site residue.

The protein belongs to the class I-like SAM-binding methyltransferase superfamily. RsmB/NOP family.

It localises to the cytoplasm. The enzyme catalyses cytidine(1407) in 16S rRNA + S-adenosyl-L-methionine = 5-methylcytidine(1407) in 16S rRNA + S-adenosyl-L-homocysteine + H(+). Specifically methylates the cytosine at position 1407 (m5C1407) of 16S rRNA. The polypeptide is Ribosomal RNA small subunit methyltransferase F (Aliivibrio fischeri (strain ATCC 700601 / ES114) (Vibrio fischeri)).